A 111-amino-acid polypeptide reads, in one-letter code: Large ribosomal subunit protein uL24 (111 aa).

It belongs to the universal ribosomal protein uL24 family. In terms of assembly, part of the 50S ribosomal subunit.

Its function is as follows. One of two assembly initiator proteins, it binds directly to the 5'-end of the 23S rRNA, where it nucleates assembly of the 50S subunit. In terms of biological role, one of the proteins that surrounds the polypeptide exit tunnel on the outside of the subunit. The polypeptide is Large ribosomal subunit protein uL24 (Streptococcus pneumoniae (strain Hungary19A-6)).